A 303-amino-acid chain; its full sequence is DCN1-like protein 3 (303 aa).

Residues 1–40 (MGQCVTKCKNPSSTLGSKNGERESSKPHKRSSSHKEEHMS) form a disordered region. A lipid anchor (N-myristoyl glycine) is attached at Gly2. The DCUN1 domain occupies 85–277 (SSLQRIEELF…LFDTFVEWEM (193 aa)).

In terms of assembly, may interact (via the DCUN1 domain) with unneddylated cullins.

It localises to the cell membrane. The protein localises to the cytoplasm. Its subcellular location is the nucleus. It is found in the perinuclear region. In terms of biological role, contributes to the neddylation of all cullins by transferring NEDD8 from N-terminally acetylated NEDD8-conjugating E2s enzyme to different cullin C-terminal domain-RBX complexes. At the cell membrane, can promote and as well inhibit cullins neddylation. The polypeptide is DCN1-like protein 3 (Xenopus laevis (African clawed frog)).